Here is a 247-residue protein sequence, read N- to C-terminus: Adenosylcobinamide-GDP ribazoletransferase (247 aa).

The next 6 membrane-spanning stretches (helical) occupy residues 31 to 51 (ILFY…VTCI), 55 to 75 (LPAL…TGGL), 109 to 129 (IGVL…YVLI), 135 to 155 (LFLI…FLTT), 183 to 203 (VLLL…SFLI), and 227 to 247 (AIEI…FYLV).

This sequence belongs to the CobS family. The cofactor is Mg(2+).

The protein resides in the cell inner membrane. The enzyme catalyses alpha-ribazole + adenosylcob(III)inamide-GDP = adenosylcob(III)alamin + GMP + H(+). It catalyses the reaction alpha-ribazole 5'-phosphate + adenosylcob(III)inamide-GDP = adenosylcob(III)alamin 5'-phosphate + GMP + H(+). The protein operates within cofactor biosynthesis; adenosylcobalamin biosynthesis; adenosylcobalamin from cob(II)yrinate a,c-diamide: step 7/7. Its function is as follows. Joins adenosylcobinamide-GDP and alpha-ribazole to generate adenosylcobalamin (Ado-cobalamin). Also synthesizes adenosylcobalamin 5'-phosphate from adenosylcobinamide-GDP and alpha-ribazole 5'-phosphate. This Acinetobacter baumannii (strain ACICU) protein is Adenosylcobinamide-GDP ribazoletransferase.